We begin with the raw amino-acid sequence, 359 residues long: Maleylacetate reductase 2 (359 aa).

This sequence belongs to the iron-containing alcohol dehydrogenase family. As to quaternary structure, homodimer.

It carries out the reaction 3-oxoadipate + NAD(+) = maleylacetate + NADH + H(+). The enzyme catalyses 3-oxoadipate + NADP(+) = maleylacetate + NADPH + H(+). It functions in the pathway aromatic compound metabolism; 3-chlorocatechol degradation. With respect to regulation, inhibited by p-chloromercuribenzoate and by 3-oxoadipate, and, in a temperature-dependent manner, by manganese. In terms of biological role, plays a major role in the degradation of chloroaromatic compounds by channeling maleylacetate and some of its substituted derivatives into the 3-oxoadipate pathway. This enzyme converts maleylacetate and 2-chloromaleylacetate with similar efficiencies. NADH is preferred to NADPH as the cosubstrate. This Cupriavidus pinatubonensis (strain JMP 134 / LMG 1197) (Cupriavidus necator (strain JMP 134)) protein is Maleylacetate reductase 2 (tfdFII).